A 309-amino-acid polypeptide reads, in one-letter code: Probable RuBisCO transcriptional regulator (309 aa).

Residues 5–62 (FTLQQLRILKAIATEKSFTRAAEVLFVSQPSLSKQIKTLESRLNISLLNRENNIVSLT) form the HTH lysR-type domain. Positions 22–41 (FTRAAEVLFVSQPSLSKQIK) form a DNA-binding region, H-T-H motif.

The protein belongs to the LysR transcriptional regulatory family.

The protein resides in the plastid. It localises to the chloroplast. In terms of biological role, trans-acting transcriptional regulator of RuBisCO genes (rbcL and rbcS) expression. This chain is Probable RuBisCO transcriptional regulator (rbcR), found in Trieres chinensis (Marine centric diatom).